An 87-amino-acid polypeptide reads, in one-letter code: Phosphoribosyl-ATP pyrophosphatase (87 aa).

It belongs to the PRA-PH family.

It localises to the cytoplasm. It carries out the reaction 1-(5-phospho-beta-D-ribosyl)-ATP + H2O = 1-(5-phospho-beta-D-ribosyl)-5'-AMP + diphosphate + H(+). The protein operates within amino-acid biosynthesis; L-histidine biosynthesis; L-histidine from 5-phospho-alpha-D-ribose 1-diphosphate: step 2/9. This chain is Phosphoribosyl-ATP pyrophosphatase, found in Pseudarthrobacter chlorophenolicus (strain ATCC 700700 / DSM 12829 / CIP 107037 / JCM 12360 / KCTC 9906 / NCIMB 13794 / A6) (Arthrobacter chlorophenolicus).